Consider the following 533-residue polypeptide: CTP synthase (533 aa).

The segment at 1–269 (MKKNLKILVI…HEILSSKLNI (269 aa)) is amidoligase domain. A CTP-binding site is contributed by Ser16. Position 16 (Ser16) interacts with UTP. Residues 17–22 (GIGKGV) and Asp73 each bind ATP. The Mg(2+) site is built by Asp73 and Glu143. CTP-binding positions include 150–152 (DME), 190–195 (KSKPTQ), and Lys226. Residues 190–195 (KSKPTQ) and Lys226 each bind UTP. A Glutamine amidotransferase type-1 domain is found at 304-533 (YAELDDSYAS…LFLGLIKACI (230 aa)). Gly355 contacts L-glutamine. The Nucleophile; for glutamine hydrolysis role is filled by Cys382. Residues 383 to 386 (LGLQ), Glu406, and Arg466 contribute to the L-glutamine site. Catalysis depends on residues His511 and Glu513.

Belongs to the CTP synthase family. As to quaternary structure, homotetramer.

It carries out the reaction UTP + L-glutamine + ATP + H2O = CTP + L-glutamate + ADP + phosphate + 2 H(+). The enzyme catalyses L-glutamine + H2O = L-glutamate + NH4(+). It catalyses the reaction UTP + NH4(+) + ATP = CTP + ADP + phosphate + 2 H(+). Its pathway is pyrimidine metabolism; CTP biosynthesis via de novo pathway; CTP from UDP: step 2/2. With respect to regulation, allosterically activated by GTP, when glutamine is the substrate; GTP has no effect on the reaction when ammonia is the substrate. The allosteric effector GTP functions by stabilizing the protein conformation that binds the tetrahedral intermediate(s) formed during glutamine hydrolysis. Inhibited by the product CTP, via allosteric rather than competitive inhibition. Functionally, catalyzes the ATP-dependent amination of UTP to CTP with either L-glutamine or ammonia as the source of nitrogen. Regulates intracellular CTP levels through interactions with the four ribonucleotide triphosphates. This Borreliella afzelii (strain PKo) (Borrelia afzelii) protein is CTP synthase.